We begin with the raw amino-acid sequence, 712 residues long: Glycine--tRNA ligase beta subunit (712 aa).

This sequence belongs to the class-II aminoacyl-tRNA synthetase family. Tetramer of two alpha and two beta subunits.

The protein localises to the cytoplasm. The catalysed reaction is tRNA(Gly) + glycine + ATP = glycyl-tRNA(Gly) + AMP + diphosphate. The chain is Glycine--tRNA ligase beta subunit from Acaryochloris marina (strain MBIC 11017).